Here is a 59-residue protein sequence, read N- to C-terminus: Small ribosomal subunit protein bS21 (59 aa).

Residues K40–R59 form a disordered region.

The protein belongs to the bacterial ribosomal protein bS21 family.

This Protochlamydia amoebophila (strain UWE25) protein is Small ribosomal subunit protein bS21.